Reading from the N-terminus, the 1024-residue chain is Beta-galactosidase (1024 aa).

Substrate contacts are provided by N103 and D202. D202 lines the Na(+) pocket. The Mg(2+) site is built by E417, H419, and E462. Residues E462 and E538–H541 contribute to the substrate site. E462 (proton donor) is an active-site residue. E538 (nucleophile) is an active-site residue. Residue N598 participates in Mg(2+) binding. Positions 602 and 605 each coordinate Na(+). 2 residues coordinate substrate: N605 and W1000.

Belongs to the glycosyl hydrolase 2 family. As to quaternary structure, homotetramer. Requires Mg(2+) as cofactor. Na(+) serves as cofactor.

The catalysed reaction is Hydrolysis of terminal non-reducing beta-D-galactose residues in beta-D-galactosides.. The sequence is that of Beta-galactosidase from Escherichia coli O17:K52:H18 (strain UMN026 / ExPEC).